The chain runs to 314 residues: Porphobilinogen deaminase (314 aa).

Cysteine 242 is subject to S-(dipyrrolylmethanemethyl)cysteine.

It belongs to the HMBS family. As to quaternary structure, monomer. It depends on dipyrromethane as a cofactor.

The enzyme catalyses 4 porphobilinogen + H2O = hydroxymethylbilane + 4 NH4(+). It functions in the pathway porphyrin-containing compound metabolism; protoporphyrin-IX biosynthesis; coproporphyrinogen-III from 5-aminolevulinate: step 2/4. Its function is as follows. Tetrapolymerization of the monopyrrole PBG into the hydroxymethylbilane pre-uroporphyrinogen in several discrete steps. This chain is Porphobilinogen deaminase (hemC), found in Bacillus subtilis (strain 168).